The following is a 224-amino-acid chain: Cytidylate kinase (224 aa).

An ATP-binding site is contributed by 10–18 (GPSGVGKGT).

Belongs to the cytidylate kinase family. Type 1 subfamily.

The protein localises to the cytoplasm. The enzyme catalyses CMP + ATP = CDP + ADP. It catalyses the reaction dCMP + ATP = dCDP + ADP. The protein is Cytidylate kinase of Haemophilus ducreyi (strain 35000HP / ATCC 700724).